The sequence spans 453 residues: MFDLKTILDHPNIPWKLIISGFSIAQFSFESYLTYRQYQKLSETKLPPVLEDEIDDETFHKSRNYSRAKAKFSIFGDVYNLAQKLVFIKYDLFPKIWHMAVSLLNAVLPVRFHMVSTVAQSLCFLGLLSSLSTLVDLPLSYYSHFVLEEKFGFNKLTVQLWITDMIKSLTLAYAIGGPILYLFLKIFDKFPTDFLWYIMVFLFVVQILAMTIIPVFIMPMFNKFTPLEDGELKKSIESLADRVGFPLDKIFVIDGSKRSSHSNAYFTGLPFTSKRIVLFDTLVNSNSTDEITAVLAHEIGHWQKNHIVNMVIFSQLHTFLIFSLFTSIYRNTSFYNTFGFFLEKSTGSFVDPVITKEFPIIIGFMLFNDLLTPLECAMQFVMSLISRTHEYQADAYAKKLGYKQNLCRALIDLQIKNLSTMNVDPLYSSYHYSHPTLAERLTALDYVSEKKKN.

Topologically, residues methionine 1 to asparagine 12 are lumenal. The helical transmembrane segment at isoleucine 13–leucine 33 threads the bilayer. The Cytoplasmic segment spans residues threonine 34–lysine 89. A helical transmembrane segment spans residues tyrosine 90 to valine 110. At arginine 111–serine 121 the chain is on the lumenal side. The helical transmembrane segment at leucine 122–tyrosine 142 threads the bilayer. Topologically, residues serine 143–lysine 167 are cytoplasmic. A helical membrane pass occupies residues serine 168–aspartate 188. The Lumenal segment spans residues lysine 189–tyrosine 197. The chain crosses the membrane as a helical span at residues isoleucine 198 to methionine 218. Topologically, residues proline 219–histidine 306 are cytoplasmic. Residue histidine 297 coordinates Zn(2+). The active site involves glutamate 298. Histidine 301 is a Zn(2+) binding site. Residues isoleucine 307–serine 327 form a helical membrane-spanning segment. Over isoleucine 328–glutamate 357 the chain is Lumenal. Residues phenylalanine 358 to methionine 378 traverse the membrane as a helical segment. The Cytoplasmic portion of the chain corresponds to glutamine 379–asparagine 453. Residue glutamate 390 participates in Zn(2+) binding. Residue aspartate 394 is the Proton donor of the active site.

This sequence belongs to the peptidase M48A family. It depends on Zn(2+) as a cofactor.

It localises to the endoplasmic reticulum membrane. It catalyses the reaction Hydrolyzes the peptide bond -P2-(S-farnesyl or geranylgeranyl)C-P1'-P2'-P3'-COOH where P1' and P2' are amino acids with aliphatic side chains and P3' is any C-terminal residue.. Proteolytically removes the C-terminal three residues of farnesylated A-factor mating pheromone. Also acts to cleave the N-terminal extension of the pheromone. Does not act on Ras. The polypeptide is CAAX prenyl protease 1 (STE24) (Saccharomyces cerevisiae (strain ATCC 204508 / S288c) (Baker's yeast)).